A 146-amino-acid polypeptide reads, in one-letter code: Type II secretion system core protein G (146 aa).

A propeptide spans 1-9 (MKKMRKQTG) (leader sequence). The residue at position 10 (F10) is an N-methylphenylalanine. Residues 10 to 30 (FTLLEVMVVVVILGILASFVV) form a helical membrane-spanning segment.

The protein belongs to the GSP G family. As to quaternary structure, type II secretion system is composed of four main components: the outer membrane complex, the inner membrane complex, the cytoplasmic secretion ATPase and the periplasm-spanning pseudopilus. Forms homomultimers. Interacts with EspL. Cleaved by the prepilin peptidase. In terms of processing, methylated by prepilin peptidase at the amino group of the N-terminal phenylalanine once the leader sequence is cleaved.

The protein resides in the cell inner membrane. In terms of biological role, core component of the type II secretion system required for the energy-dependent secretion of extracellular factors such as proteases and toxins from the periplasm. Pseudopilin (pilin-like) protein that polymerizes to form the pseudopilus. Further polymerization triggers pseudopilus growth. The chain is Type II secretion system core protein G (epsG) from Vibrio cholerae serotype O1 (strain ATCC 39315 / El Tor Inaba N16961).